Consider the following 163-residue polypeptide: Nucleotide-binding protein Asuc_2113 (163 aa).

It belongs to the YajQ family.

Its function is as follows. Nucleotide-binding protein. In Actinobacillus succinogenes (strain ATCC 55618 / DSM 22257 / CCUG 43843 / 130Z), this protein is Nucleotide-binding protein Asuc_2113.